A 260-amino-acid chain; its full sequence is uncharacterized protein (260 aa).

Positions 1-22 (MGNIKSFALYISILLLIVVVAG) are cleaved as a signal peptide. Cys23 carries N-palmitoyl cysteine lipidation. A lipid anchor (S-diacylglycerol cysteine) is attached at Cys23.

The protein belongs to the staphylococcal tandem lipoprotein family.

The protein localises to the cell membrane. This is an uncharacterized protein from Staphylococcus aureus (strain MRSA252).